The primary structure comprises 216 residues: FMN-dependent NADH:quinone oxidoreductase (216 aa).

FMN contacts are provided by residues S10 and 15–17; that span reads SIS.

This sequence belongs to the azoreductase type 1 family. Homodimer. It depends on FMN as a cofactor.

The enzyme catalyses 2 a quinone + NADH + H(+) = 2 a 1,4-benzosemiquinone + NAD(+). The catalysed reaction is N,N-dimethyl-1,4-phenylenediamine + anthranilate + 2 NAD(+) = 2-(4-dimethylaminophenyl)diazenylbenzoate + 2 NADH + 2 H(+). In terms of biological role, quinone reductase that provides resistance to thiol-specific stress caused by electrophilic quinones. Functionally, also exhibits azoreductase activity. Catalyzes the reductive cleavage of the azo bond in aromatic azo compounds to the corresponding amines. This chain is FMN-dependent NADH:quinone oxidoreductase, found in Nocardia farcinica (strain IFM 10152).